The sequence spans 421 residues: Phosphatidate cytidylyltransferase 1 (421 aa).

Position 1 is an N-acetylmethionine (Met1). The span at 1–12 shows a compositional bias: polar residues; sequence MEEENVTSSPST. Positions 1-26 are disordered; the sequence is MEEENVTSSPSTPVHRLRHRRRSNEV. 8 consecutive transmembrane segments (helical) span residues 60–80, 102–122, 149–169, 183–203, 206–226, 246–266, 321–341, and 369–389; these read IGGF…MVVV, LPYI…FVYG, YHMA…ILTL, WTHM…ANIF, IFWF…AYIF, GFIG…NILG, LCLG…ASGF, and VMAV…SVSV.

It belongs to the CDS family. The cofactor is Mg(2+).

The protein localises to the membrane. It catalyses the reaction a 1,2-diacyl-sn-glycero-3-phosphate + CTP + H(+) = a CDP-1,2-diacyl-sn-glycerol + diphosphate. Its pathway is phospholipid metabolism; CDP-diacylglycerol biosynthesis; CDP-diacylglycerol from sn-glycerol 3-phosphate: step 3/3. In terms of biological role, may be involved in the synthesis of minor phospholipids and in modulation of IP3-mediated signal transduction. The chain is Phosphatidate cytidylyltransferase 1 from Arabidopsis thaliana (Mouse-ear cress).